We begin with the raw amino-acid sequence, 268 residues long: MTSLDDSVLTKKNIALLDNATNYIRPAIDYFHFKFNYDSLDVSTTWRLLLKMRKHKLLRLPSCSSENEFDYSIYMARLYHCIWRRWSIKHFNLDEYKIDPLSINWNKEIDVTVLYGPDLVGIHEREQPTPTDFPMGNIKEQGKQLLDVRKEGSASSLLKKGSVFYSKGKWLSQRSISFDDTVRRRDIDKRGRFRESCVLINDVEQFQNYSIVWDESRHRYRRQALPDTYDYEHLYPNGDETPRNTPHDNIIIHQNLHSITEGSYIYIK.

To yeast YKR075c.

This is an uncharacterized protein from Saccharomyces cerevisiae (strain ATCC 204508 / S288c) (Baker's yeast).